Here is a 913-residue protein sequence, read N- to C-terminus: Glutamate receptor ionotropic, kainate 2 (913 aa).

The Extracellular portion of the chain corresponds to 1–566 (MCAGTMKIIS…VFSFLNPLSP (566 aa)). Residues N72, N78, N280, N383, N417, N428, and N435 are each glycosylated (N-linked (GlcNAc...) asparagine). C101 and C352 are disulfide-bonded. L-glutamate-binding residues include P521, A523, and R528. The N-linked (GlcNAc...) asparagine glycan is linked to N551. The chain crosses the membrane as a helical span at residues 567 to 587 (DIWMYILLAYLGVSCVLFVIA). At 588–643 (RFSPYEWYNPHPCNPDSDVVENNFTLLNSFWFGVGALMQQGSELMPKALSTRIVGG) the chain is on the cytoplasmic side. Residues 644–664 (IWWFFTLIIISSYTANLAAFL) traverse the membrane as a helical segment. The Extracellular portion of the chain corresponds to 665–824 (TVERMESPID…KEASALGVQN (160 aa)). Residues A694, T695, and E743 each coordinate L-glutamate. C755 and C809 are joined by a disulfide. N756 carries N-linked (GlcNAc...) asparagine glycosylation. Residues 825–845 (IGGIFIVLAAGLVLSVFVAVG) form a helical membrane-spanning segment. Topologically, residues 846–913 (EFLYKSKKNA…RRLPGKETMA (68 aa)) are cytoplasmic.

This sequence belongs to the glutamate-gated ion channel (TC 1.A.10.1) family. GRIK2 subfamily. Homotetramer and heterotetramer with GRIK5. Tetramers may be formed by the dimerization of dimers.

The protein resides in the cell membrane. The protein localises to the postsynaptic cell membrane. It carries out the reaction Ca(2+)(in) = Ca(2+)(out). It catalyses the reaction Na(+)(in) = Na(+)(out). Its activity is regulated as follows. Cold receptor activity activated by temperatures between 10-19 degrees Celsius. In terms of biological role, ionotropic glutamate receptor that functions as a cation-permeable ligand-gated ion channel, gated by L-glutamate and the glutamatergic agonist kainic acid. L-glutamate acts as an excitatory neurotransmitter at many synapses in the central nervous system. Binding of the excitatory neurotransmitter L-glutamate induces a conformation change, leading to the opening of the cation channel, and thereby converts the chemical signal to an electrical impulse. The receptor then desensitizes rapidly and enters a transient inactive state, characterized by the presence of bound agonist. Functionally, independent of its ionotropic glutamate receptor activity, acts as a thermoreceptor conferring sensitivity to cold temperatures. Functions in dorsal root ganglion neurons. The protein is Glutamate receptor ionotropic, kainate 2 (grik2) of Xenopus laevis (African clawed frog).